A 460-amino-acid polypeptide reads, in one-letter code: 3-isopropylmalate dehydratase large subunit (460 aa).

[4Fe-4S] cluster is bound by residues Cys338, Cys398, and Cys401.

This sequence belongs to the aconitase/IPM isomerase family. LeuC type 1 subfamily. In terms of assembly, heterodimer of LeuC and LeuD. It depends on [4Fe-4S] cluster as a cofactor.

The enzyme catalyses (2R,3S)-3-isopropylmalate = (2S)-2-isopropylmalate. It participates in amino-acid biosynthesis; L-leucine biosynthesis; L-leucine from 3-methyl-2-oxobutanoate: step 2/4. Catalyzes the isomerization between 2-isopropylmalate and 3-isopropylmalate, via the formation of 2-isopropylmaleate. This is 3-isopropylmalate dehydratase large subunit from Streptococcus thermophilus (strain CNRZ 1066).